The chain runs to 127 residues: Two-component response regulator ORR41 (127 aa).

Residues 7–125 (RVLLVEDEEI…KLGVILAKFR (119 aa)) enclose the Response regulatory domain. Position 60 is a 4-aspartylphosphate (Asp-60).

The protein belongs to the ARR family. Type-C subfamily. In terms of processing, two-component system major event consists of a His-to-Asp phosphorelay between a sensor histidine kinase (HK) and a response regulator (RR). In plants, the His-to-Asp phosphorelay involves an additional intermediate named Histidine-containing phosphotransfer protein (HPt). This multistep phosphorelay consists of a His-Asp-His-Asp sequential transfer of a phosphate group between first a His and an Asp of the HK protein, followed by the transfer to a conserved His of the HPt protein and finally the transfer to an Asp in the receiver domain of the RR protein.

Functionally, functions as a response regulator involved in His-to-Asp phosphorelay signal transduction system. Phosphorylation of the Asp residue in the receiver domain activates the ability of the protein to promote the transcription of target genes. May directly activate some type-A response regulators in response to cytokinins. The sequence is that of Two-component response regulator ORR41 from Oryza sativa subsp. japonica (Rice).